The chain runs to 103 residues: Protamine-2 (103 aa).

The segment at 1-103 (MVRYRMRSLS…RTRRRRCRRH (103 aa)) is disordered. Residues Ser-8 and Ser-10 each carry the phosphoserine modification. Positions 8–17 (SLSERPHEVH) are enriched in basic and acidic residues. Positions 18 to 29 (GQQVHGQDQGHN) are enriched in low complexity. Over residues 48–103 (HRGHSHHRRRRCSRRRLHRIHRRRHRSCRRRRRRSCRHRRRHRRGCRTRRRRCRRH) the composition is skewed to basic residues.

The protein belongs to the protamine P2 family. As to quaternary structure, interacts with TDRP. Post-translationally, proteolytic processing into mature chains is required for histone eviction during spermatogenesis. Transition proteins (TNP1 and TNP2) are required for processing. In terms of tissue distribution, testis.

It localises to the nucleus. The protein localises to the chromosome. Functionally, protamines substitute for histones in the chromatin of sperm during the haploid phase of spermatogenesis. They compact sperm DNA into a highly condensed, stable and inactive complex. The protein is Protamine-2 (PRM2) of Macaca nemestrina (Pig-tailed macaque).